A 401-amino-acid polypeptide reads, in one-letter code: Argininosuccinate synthase (401 aa).

ATP contacts are provided by residues 7–15 and Ala-34; that span reads AYSGGLDTS. Residues Tyr-85 and Ser-90 each contribute to the L-citrulline site. Gly-115 contributes to the ATP binding site. The L-aspartate site is built by Thr-117, Asn-121, and Asp-122. Residue Asn-121 participates in L-citrulline binding. The L-citrulline site is built by Arg-125, Ser-174, Ser-183, Glu-259, and Tyr-271.

It belongs to the argininosuccinate synthase family. Type 1 subfamily. In terms of assembly, homotetramer.

The protein resides in the cytoplasm. The catalysed reaction is L-citrulline + L-aspartate + ATP = 2-(N(omega)-L-arginino)succinate + AMP + diphosphate + H(+). It functions in the pathway amino-acid biosynthesis; L-arginine biosynthesis; L-arginine from L-ornithine and carbamoyl phosphate: step 2/3. The protein is Argininosuccinate synthase of Pelotomaculum thermopropionicum (strain DSM 13744 / JCM 10971 / SI).